A 796-amino-acid chain; its full sequence is Cation/H(+) antiporter 6B (796 aa).

13 helical membrane-spanning segments follow: residues 54–74 (DFWEYPLPQLEIIILSIFLLW), 93–113 (SMMLVGAVLSEMFGSMQIPCL), 131–151 (IGAFAFVLDWFLRGVTTDVGI), 159–179 (SVVIGITSMIIPWQIGKLLYS), 194–213 (YTVMTFTMSMTPFTCVNMLL), 223–243 (FGQIAQSAGMVTDLLAFFLTV), 259–279 (LAFMAFFIFVYLVRQFMLWVI), 285–305 (GAPVKNVYLYIGLLLAYLSYL), 310–330 (FLFFGPLGAFALGLAVPNGPP), 344–364 (EGIFLPLFGSLSMIKLDWSFL), 382–402 (FSFLPIVYIAKFATSFLAALA), 411–431 (IILGVIMGTKSSFELGYVLTA), and 444–464 (LLGVYILVNSLLTPMAIHFLY).

This sequence belongs to the monovalent cation:proton antiporter 2 (CPA2) transporter (TC 2.A.37) family. CHX (TC 2.A.37.4) subfamily. Preferentially expressed in pollen.

It is found in the membrane. May operate as a cation/H(+) antiporter. This is Cation/H(+) antiporter 6B (CHX6b) from Arabidopsis thaliana (Mouse-ear cress).